The primary structure comprises 81 residues: Acyl carrier protein (81 aa).

The Carrier domain occupies 2-80 (ASEQEILSGL…DAVAYISQAQ (79 aa)). Residue Ser40 is modified to O-(pantetheine 4'-phosphoryl)serine.

The protein belongs to the acyl carrier protein (ACP) family. In terms of processing, 4'-phosphopantetheine is transferred from CoA to a specific serine of apo-ACP by AcpS. This modification is essential for activity because fatty acids are bound in thioester linkage to the sulfhydryl of the prosthetic group.

The protein resides in the cytoplasm. It participates in lipid metabolism; fatty acid biosynthesis. Its function is as follows. Carrier of the growing fatty acid chain in fatty acid biosynthesis. The polypeptide is Acyl carrier protein (Kineococcus radiotolerans (strain ATCC BAA-149 / DSM 14245 / SRS30216)).